The following is a 74-amino-acid chain: Brevinin-2Ta (74 aa).

The first 22 residues, 1-22, serve as a signal peptide directing secretion; it reads MFTMKKSLLLFFFLGTISLSLC. The propeptide occupies 23–41; it reads QEERNADEDDGEMTEEEKR. Cysteine 68 and cysteine 74 form a disulfide bridge.

It belongs to the frog skin active peptide (FSAP) family. Brevinin subfamily. In terms of tissue distribution, expressed by the skin glands.

The protein localises to the secreted. Its function is as follows. Antimicrobial peptide. The protein is Brevinin-2Ta of Rana temporaria (European common frog).